The following is a 141-amino-acid chain: Large ribosomal subunit protein uL11 (141 aa).

Belongs to the universal ribosomal protein uL11 family. In terms of assembly, part of the ribosomal stalk of the 50S ribosomal subunit. Interacts with L10 and the large rRNA to form the base of the stalk. L10 forms an elongated spine to which L12 dimers bind in a sequential fashion forming a multimeric L10(L12)X complex. Post-translationally, one or more lysine residues are methylated.

In terms of biological role, forms part of the ribosomal stalk which helps the ribosome interact with GTP-bound translation factors. In Fusobacterium nucleatum subsp. nucleatum (strain ATCC 25586 / DSM 15643 / BCRC 10681 / CIP 101130 / JCM 8532 / KCTC 2640 / LMG 13131 / VPI 4355), this protein is Large ribosomal subunit protein uL11.